A 246-amino-acid chain; its full sequence is MRSAMNPKDTLFSAPIDKIGDFTFDERVAEVFPDMIQRSVPGYSNIISAIGMLAERFVKPHSKIYDLGCSLGAATLSMRRHIKQEGCQIIAVDNSAAMVERCKLHLNAYRSDTPVQVIEADIRDIAIENASVVVLNFTLQFLAPDDRYALLEKIYAGLRPGGILILSEKFVFSDQEAHELLIDLHHDFKRANGYSELEISQKRSAIENVMRPDSIQTHKQRFATLGFSSFEVWFQCFNFGSMFAIK.

S-adenosyl-L-methionine contacts are provided by residues Tyr43, 68–70, 93–94, 121–122, Asn136, and Arg203; these read GCS, DN, and DI.

Belongs to the class I-like SAM-binding methyltransferase superfamily. Cx-SAM synthase family. In terms of assembly, homodimer.

It carries out the reaction prephenate + S-adenosyl-L-methionine = carboxy-S-adenosyl-L-methionine + 3-phenylpyruvate + H2O. Functionally, catalyzes the conversion of S-adenosyl-L-methionine (SAM) to carboxy-S-adenosyl-L-methionine (Cx-SAM). The protein is Carboxy-S-adenosyl-L-methionine synthase of Vibrio cholerae serotype O1 (strain ATCC 39541 / Classical Ogawa 395 / O395).